Reading from the N-terminus, the 1227-residue chain is MDGTNERRSGLMAFEQFLSAEEIKAVQLAEAHSDKQQKRTAEQIEAIYTHGQNVLVSASAGSGKTFVMVQRILDKLKRGIGIDQLFISTFTVKAAGELKERIEKKLNETIAETTDMELRRHLSAQLADLTKADIGTMDSFTQKLVTTYGYSLGISPQFRILQDETEKASLKKEVFDQLFADYLEEDENGAFRKLVRNFSGNRKDNSGFRQVVYQVHDFSQSTSSPTKWLKEQAVQADLYSQERIEQMLEQGFKEKVLDKLYQAADFFRYHVEWGRNDFGSAKYFANVEEVLDLLTGLDSLDQKDLMERVERILLINNQSRGKGLTNANRPKDEHLIAFKEEYNAGKSQIISELRDLGQEVYELTLLKDYQVQALPLLILLRDFVLDFSQAYLDVKIKEAAFEFGDIGHFAIRILEENADIRQFFQEKYHEVMVDEYQDNNHSQERMLDLLSNGHNRFMVGDIKQSIYRFRQADPMIFQEKFELYQANPQSGKLILLKENFRSQIEVLEATNAIFTRLMDRQVGEIKYDDTHSLVAGSPGQKIAQPKNEMEYLIYDQQDSANSSTDAEEETPLTAGEIEVVAKEIIRLHNEEGADFKDITLLVQKRTHNDLIMSIFEKHGIPIVADGGAASYLQSLEVMIMLDTLRVINNPLNDYALVALLKSPMFRFDEDELTRISLQAGTGFFYQKMEIAQQASGQHPELMSEKLKKKITDFLSILENWRAYAKLHSIYDMIWKMFNEKFYYDYVGALPNGSKRQANLYALGLRANQFEKTGYKGLSRFIAMIDRALANDKDLADVQEFLPQNAVQLMTIHKSKGLEFKYVFLMNIDKRFNLEDHYQSVIISRKNGLGIQYLADMKDKVNSPLPQVRVLMNTLPYQNNLQELKIANLSEQMRLLYVALTRAEKKLYLVGKGNADKLAEKYDGKKENGVLAQSTRESMATFQDWILAIDEAFSGEDLHFKKVFVTDEDLTEEKIGKLTLKSKLEDASLKDIRQSEDIAQALDQLSSVQELNERYKAAIELPSLRTPSQIKKLYEPILEQEGMEVMEKYQPKRTFNLPDFSKKPKITGAQVGSAVHELMQRLDLSWLVTEDTVRAALEAVHAEQAIKDKINVQMILDFFDTDLGREILANTDKLHREAPFASLQTDSVSQENFVLRGIIDGYLLYDDHIVLFDYKTDKYDQPIQLSQRYQAQMQLYAEALKKAYKIDRVDCHLILLGGERIEVVEVNI.

Residues 37–503 (QKRTAEQIEA…ILLKENFRSQ (467 aa)) enclose the UvrD-like helicase ATP-binding domain. 58–65 (ASAGSGKT) is an ATP binding site. Residues 532–816 (SLVAGSPGQK…QLMTIHKSKG (285 aa)) enclose the UvrD-like helicase C-terminal domain.

This sequence belongs to the helicase family. AddA subfamily. Heterodimer of AddA and AddB/RexB. Requires Mg(2+) as cofactor.

The enzyme catalyses Couples ATP hydrolysis with the unwinding of duplex DNA by translocating in the 3'-5' direction.. The catalysed reaction is ATP + H2O = ADP + phosphate + H(+). In terms of biological role, the heterodimer acts as both an ATP-dependent DNA helicase and an ATP-dependent, dual-direction single-stranded exonuclease. Recognizes the chi site generating a DNA molecule suitable for the initiation of homologous recombination. The AddA nuclease domain is required for chi fragment generation; this subunit has the helicase and 3' -&gt; 5' nuclease activities. This is ATP-dependent helicase/nuclease subunit A from Streptococcus suis (strain 98HAH33).